The sequence spans 333 residues: 4-hydroxy-3-methylbut-2-enyl diphosphate reductase (333 aa).

Cysteine 20 contacts [4Fe-4S] cluster. Histidine 49 and histidine 82 together coordinate (2E)-4-hydroxy-3-methylbut-2-enyl diphosphate. Dimethylallyl diphosphate contacts are provided by histidine 49 and histidine 82. Histidine 49 and histidine 82 together coordinate isopentenyl diphosphate. Residue cysteine 104 coordinates [4Fe-4S] cluster. Residue histidine 132 participates in (2E)-4-hydroxy-3-methylbut-2-enyl diphosphate binding. A dimethylallyl diphosphate-binding site is contributed by histidine 132. Histidine 132 lines the isopentenyl diphosphate pocket. Glutamate 134 (proton donor) is an active-site residue. Threonine 172 lines the (2E)-4-hydroxy-3-methylbut-2-enyl diphosphate pocket. Residue cysteine 202 coordinates [4Fe-4S] cluster. Residues serine 230, serine 231, asparagine 232, and serine 274 each coordinate (2E)-4-hydroxy-3-methylbut-2-enyl diphosphate. 4 residues coordinate dimethylallyl diphosphate: serine 230, serine 231, asparagine 232, and serine 274. Isopentenyl diphosphate contacts are provided by serine 230, serine 231, asparagine 232, and serine 274.

Belongs to the IspH family. The cofactor is [4Fe-4S] cluster.

It carries out the reaction isopentenyl diphosphate + 2 oxidized [2Fe-2S]-[ferredoxin] + H2O = (2E)-4-hydroxy-3-methylbut-2-enyl diphosphate + 2 reduced [2Fe-2S]-[ferredoxin] + 2 H(+). It catalyses the reaction dimethylallyl diphosphate + 2 oxidized [2Fe-2S]-[ferredoxin] + H2O = (2E)-4-hydroxy-3-methylbut-2-enyl diphosphate + 2 reduced [2Fe-2S]-[ferredoxin] + 2 H(+). Its pathway is isoprenoid biosynthesis; dimethylallyl diphosphate biosynthesis; dimethylallyl diphosphate from (2E)-4-hydroxy-3-methylbutenyl diphosphate: step 1/1. It participates in isoprenoid biosynthesis; isopentenyl diphosphate biosynthesis via DXP pathway; isopentenyl diphosphate from 1-deoxy-D-xylulose 5-phosphate: step 6/6. In terms of biological role, catalyzes the conversion of 1-hydroxy-2-methyl-2-(E)-butenyl 4-diphosphate (HMBPP) into a mixture of isopentenyl diphosphate (IPP) and dimethylallyl diphosphate (DMAPP). Acts in the terminal step of the DOXP/MEP pathway for isoprenoid precursor biosynthesis. The polypeptide is 4-hydroxy-3-methylbut-2-enyl diphosphate reductase (Polaromonas sp. (strain JS666 / ATCC BAA-500)).